A 668-amino-acid polypeptide reads, in one-letter code: Spartin (668 aa).

At methionine 1 the chain carries N-acetylmethionine. The region spanning 16–94 (IKEAYKKAFV…LQNVRTRLEI (79 aa)) is the MIT domain. Positions 110 to 176 (VPKLYPEFPP…PSEAPPAYTP (67 aa)) are disordered. Positions 118-127 (PPKDMSEKSP) are enriched in basic and acidic residues. Serine 126 is modified (phosphoserine). The span at 128 to 162 (EPQSLSSLPQHSEVNGSTSTASAESSSTPTTLSLP) shows a compositional bias: low complexity. Residues 190–380 (ESGEFSSVGE…QLDPSSKDVR (191 aa)) are ubiquitin-binding region (UBR) domain. Positions 193–200 (EFSSVGEN) match the LC3-interacting region (LIR); mediates interaction with MAP1LC3A AND MAP1LC3C motif. The disordered stretch occupies residues 348 to 396 (FQIPGISGSASDQLKEASGTDVRQLDPSSKDVRQKGKRGKKTKGTSSEE). A Glycyl lysine isopeptide (Lys-Gly) (interchain with G-Cter in ubiquitin) cross-link involves residue lysine 362. The Senescence domain occupies 427 to 611 (ILSGASWVSW…YNIDNIGIKA (185 aa)). A required for localization to lipid droplets region spans residues 431–503 (ASWVSWGLVK…LVDGVCTVAN (73 aa)). Serine 470 is subject to Phosphoserine. Positions 631 to 668 (IDNSKGENPGGGASANLKGEKDEQKEGPEKNGAKKKDK) are disordered. The span at 648–668 (KGEKDEQKEGPEKNGAKKKDK) shows a compositional bias: basic and acidic residues.

In terms of assembly, interacts with ITCH and WWP1. Interacts (via MIT domain) with IST1; leading to the recruitment of SPART to midbodies. Interacts with MAP1LC3A and MAP1LC3C. Ubiquitinated; ubiquitination does not require ITCH and WWP1.

The protein resides in the cytoplasm. It is found in the midbody. The protein localises to the lipid droplet. In terms of biological role, lipophagy receptor that plays an important role in lipid droplet (LD) turnover in motor neurons. Localizes to LDs and interacts with components of the autophagy machinery, such as MAP1LC3A/C proteins to deliver LDs to autophagosomes for degradation via lipophagy. Lipid transfer protein required for lipid droplet degradation, including by lipophagy. Can bind and transfer all lipid species found in lipid droplets, from phospholipids to triglycerides and sterol esters but the direction of lipid transfer by spartin and its cargos are unknown. May be implicated in endosomal trafficking, or microtubule dynamics, or both. Participates in cytokinesis. This Bos taurus (Bovine) protein is Spartin.